The sequence spans 391 residues: Trehalose-phosphate phosphatase (391 aa).

Aspartate 147 acts as the Nucleophile in catalysis. Mg(2+) contacts are provided by aspartate 147, aspartate 149, and aspartate 330. Aspartate 147–aspartate 149 contacts substrate.

This sequence belongs to the trehalose phosphatase family. It depends on Mg(2+) as a cofactor.

The catalysed reaction is alpha,alpha-trehalose 6-phosphate + H2O = alpha,alpha-trehalose + phosphate. Its pathway is glycan biosynthesis; trehalose biosynthesis. In terms of biological role, removes the phosphate from trehalose 6-phosphate to produce free trehalose. The protein is Trehalose-phosphate phosphatase (otsB) of Mycolicibacterium paratuberculosis (strain ATCC BAA-968 / K-10) (Mycobacterium paratuberculosis).